Reading from the N-terminus, the 403-residue chain is High affinity transport system protein p37 (403 aa).

The N-terminal stretch at 1 to 23 (MLKKLKNFILFSSIFSPIAFAIS) is a signal peptide. Cysteine 24 carries the N-palmitoyl cysteine lipid modification. Residue cysteine 24 is the site of S-diacylglycerol cysteine attachment.

The protein localises to the cell membrane. Functionally, P37 is part of a high-affinity transport system. This Mesomycoplasma hyorhinis (Mycoplasma hyorhinis) protein is High affinity transport system protein p37 (p37).